The sequence spans 150 residues: Translation machinery-associated protein 17 (150 aa).

2 positions are modified to phosphoserine: Ser24 and Ser68. Residues 110 to 139 (RKTGHGKSKHEVEAKDNTNKGPDVDMDNSN) are disordered. The span at 118-127 (KHEVEAKDNT) shows a compositional bias: basic and acidic residues.

In terms of assembly, interacts with RPT6. Interacts with the 40S and 60S ribosomal subunits.

Its subcellular location is the cytoplasm. It localises to the nucleus. Functionally, ATPase-dedicated chaperone that assists the formation of the RPT6-RPT3 ATPase pair, an early step in proteasome assembly. Plays a key role in maintaining homeostatic proteasome levels and adjusting proteasome assembly when demands increase, such as during proteasome stresses. Function overlaps with RPN14. This Saccharomyces cerevisiae (strain ATCC 204508 / S288c) (Baker's yeast) protein is Translation machinery-associated protein 17 (TMA17).